Reading from the N-terminus, the 539-residue chain is Protein Wnt-4 (539 aa).

The N-terminal stretch at 1-21 is a signal peptide; it reads MPSPTGVFVLMILTHLSFGLG. Positions 34–77 are disordered; sequence QNGDLDSSNPAIHHQQHQQHQQHQQHQQHQSNHNLNNGNMNSTI. Positions 51–74 are enriched in low complexity; the sequence is QQHQQHQQHQQHQSNHNLNNGNMN. Residues Asn-74 and Asn-284 are each glycosylated (N-linked (GlcNAc...) asparagine). 5 cysteine pairs are disulfide-bonded: Cys-274-Cys-285, Cys-322-Cys-330, Cys-332-Cys-349, Cys-397-Cys-411, and Cys-399-Cys-406. Residue Ser-403 is the site of O-palmitoleoyl serine; by PORCN attachment. A glycan (N-linked (GlcNAc...) asparagine) is linked at Asn-419. Positions 436-463 are disordered; the sequence is APNQRSMRQVSSSRMKKPKQRRKKPQQS. Low complexity predominate over residues 439 to 448; it reads QRSMRQVSSS. Basic residues predominate over residues 449–460; sequence RMKKPKQRRKKP. Intrachain disulfides connect Cys-478–Cys-497, Cys-486–Cys-492, Cys-496–Cys-538, Cys-512–Cys-529, Cys-514–Cys-526, and Cys-521–Cys-522.

The protein belongs to the Wnt family. In terms of processing, palmitoleoylated by porcupine. The lipid group functions as a sorting signal, targeting the ligand to polarized vesicles that transport Wnt4 to unique sites at the cell surface. Depalmitoleoylated by notum, leading to inhibit Wnt signaling pathway.

The protein resides in the secreted. It localises to the extracellular space. The protein localises to the extracellular matrix. Functionally, binds as a ligand to a family of frizzled seven-transmembrane receptors and acts through a cascade of genes on the nucleus. Acts downstream of homeotic complex genes in the visceral mesoderm and is required for embryonic segmentation. Also required for cell movement and FAK regulation during ovarian morphogenesis. The sequence is that of Protein Wnt-4 (Wnt4) from Drosophila melanogaster (Fruit fly).